Reading from the N-terminus, the 166-residue chain is Regulatory protein RecX (166 aa).

The protein belongs to the RecX family.

The protein resides in the cytoplasm. Its function is as follows. Modulates RecA activity. This Salmonella arizonae (strain ATCC BAA-731 / CDC346-86 / RSK2980) protein is Regulatory protein RecX.